Reading from the N-terminus, the 376-residue chain is Anhydro-N-acetylmuramic acid kinase (376 aa).

16 to 23 provides a ligand contact to ATP; sequence GTSMDGVD.

It belongs to the anhydro-N-acetylmuramic acid kinase family.

It carries out the reaction 1,6-anhydro-N-acetyl-beta-muramate + ATP + H2O = N-acetyl-D-muramate 6-phosphate + ADP + H(+). It functions in the pathway amino-sugar metabolism; 1,6-anhydro-N-acetylmuramate degradation. Its pathway is cell wall biogenesis; peptidoglycan recycling. In terms of biological role, catalyzes the specific phosphorylation of 1,6-anhydro-N-acetylmuramic acid (anhMurNAc) with the simultaneous cleavage of the 1,6-anhydro ring, generating MurNAc-6-P. Is required for the utilization of anhMurNAc either imported from the medium or derived from its own cell wall murein, and thus plays a role in cell wall recycling. This is Anhydro-N-acetylmuramic acid kinase from Paraburkholderia xenovorans (strain LB400).